Reading from the N-terminus, the 428-residue chain is Adenylosuccinate synthetase (428 aa).

Residues 11-17 (GDEGKGK) and 39-41 (GHT) contribute to the GTP site. Asp12 acts as the Proton acceptor in catalysis. 2 residues coordinate Mg(2+): Asp12 and Gly39. IMP contacts are provided by residues 12–15 (DEGK), 37–40 (NAGH), Thr130, Arg144, Asn226, Thr241, and Arg305. Residue His40 is the Proton donor of the active site. A substrate-binding site is contributed by 301-307 (VTTGRKR). GTP-binding positions include Arg307, 333-335 (KLD), and 415-417 (GTG).

Belongs to the adenylosuccinate synthetase family. As to quaternary structure, homodimer. The cofactor is Mg(2+).

Its subcellular location is the cytoplasm. It carries out the reaction IMP + L-aspartate + GTP = N(6)-(1,2-dicarboxyethyl)-AMP + GDP + phosphate + 2 H(+). It functions in the pathway purine metabolism; AMP biosynthesis via de novo pathway; AMP from IMP: step 1/2. Its function is as follows. Plays an important role in the de novo pathway and in the salvage pathway of purine nucleotide biosynthesis. Catalyzes the first committed step in the biosynthesis of AMP from IMP. The chain is Adenylosuccinate synthetase from Candida dubliniensis (strain CD36 / ATCC MYA-646 / CBS 7987 / NCPF 3949 / NRRL Y-17841) (Yeast).